We begin with the raw amino-acid sequence, 100 residues long: Large ribosomal subunit protein bL27 (100 aa).

Positions 1–13 (MNKLYWLTDLQLF) are excised as a propeptide. Residues 17–39 (KGVGSSKNGRDSNPKYLGAKLGD) form a disordered region.

This sequence belongs to the bacterial ribosomal protein bL27 family. Post-translationally, the N-terminus is cleaved by ribosomal processing cysteine protease Prp.

This chain is Large ribosomal subunit protein bL27, found in Ureaplasma parvum serovar 3 (strain ATCC 700970).